We begin with the raw amino-acid sequence, 187 residues long: uncharacterized protein (187 aa).

Residues 6-66 form the HTH tetR-type domain; sequence TDLAEQIFSA…QFAHRVFSMF (61 aa). A DNA-binding region (H-T-H motif) is located at residues 29 to 48; sequence SMLKLAKEANVAAGTIYLYF.

This is an uncharacterized protein from Haemophilus influenzae (strain ATCC 51907 / DSM 11121 / KW20 / Rd).